The chain runs to 459 residues: Cysteine--tRNA ligase (459 aa).

A Zn(2+)-binding site is contributed by Cys-29. Positions 31 to 41 (MTVYDLCHLGH) match the 'HIGH' region motif. Residues Cys-213, His-238, and Glu-242 each contribute to the Zn(2+) site. Positions 270–274 (KMSKS) match the 'KMSKS' region motif. Lys-273 contacts ATP.

Belongs to the class-I aminoacyl-tRNA synthetase family. In terms of assembly, monomer. Zn(2+) is required as a cofactor.

It is found in the cytoplasm. It catalyses the reaction tRNA(Cys) + L-cysteine + ATP = L-cysteinyl-tRNA(Cys) + AMP + diphosphate. This is Cysteine--tRNA ligase from Variovorax paradoxus (strain S110).